The chain runs to 454 residues: tRNA modification GTPase MnmE (454 aa).

(6S)-5-formyl-5,6,7,8-tetrahydrofolate is bound by residues Arg-23, Glu-80, and Lys-120. Residues 216–377 (GMKVVIAGRP…LRDHLKQSMG (162 aa)) enclose the TrmE-type G domain. Asn-226 is a binding site for K(+). Residues 226-231 (NAGKSS), 245-251 (TDIAGTT), 270-273 (DTAG), 335-338 (NKAD), and 358-360 (SAR) each bind GTP. Ser-230 is a binding site for Mg(2+). K(+)-binding residues include Thr-245, Ile-247, and Thr-250. Thr-251 is a binding site for Mg(2+). Position 454 (Lys-454) interacts with (6S)-5-formyl-5,6,7,8-tetrahydrofolate.

It belongs to the TRAFAC class TrmE-Era-EngA-EngB-Septin-like GTPase superfamily. TrmE GTPase family. In terms of assembly, homodimer. Heterotetramer of two MnmE and two MnmG subunits. It depends on K(+) as a cofactor.

Its subcellular location is the cytoplasm. Functionally, exhibits a very high intrinsic GTPase hydrolysis rate. Involved in the addition of a carboxymethylaminomethyl (cmnm) group at the wobble position (U34) of certain tRNAs, forming tRNA-cmnm(5)s(2)U34. The chain is tRNA modification GTPase MnmE from Yersinia pseudotuberculosis serotype IB (strain PB1/+).